We begin with the raw amino-acid sequence, 498 residues long: Probable malate:quinone oxidoreductase (498 aa).

Belongs to the MQO family. FAD serves as cofactor.

It catalyses the reaction (S)-malate + a quinone = a quinol + oxaloacetate. It participates in carbohydrate metabolism; tricarboxylic acid cycle; oxaloacetate from (S)-malate (quinone route): step 1/1. The protein is Probable malate:quinone oxidoreductase of Prochlorococcus marinus (strain MIT 9312).